The chain runs to 58 residues: UPF0391 membrane protein Sbal195_1447 (58 aa).

2 consecutive transmembrane segments (helical) span residues 6-26 and 28-48; these read LVFLVVAVIAGLLGFTGIAGA and AGIAKIIFFVFIVLLVISLLV.

It belongs to the UPF0391 family.

It localises to the cell membrane. The polypeptide is UPF0391 membrane protein Sbal195_1447 (Shewanella baltica (strain OS195)).